Consider the following 322-residue polypeptide: Prephenate dehydratase (322 aa).

The Prephenate dehydratase domain maps to 5 to 191; sequence RIAYLGPEGT…ARTRFVLVGM (187 aa). One can recognise an ACT domain in the interval 205 to 282; the sequence is SAVLRIDNAP…ADVCYLGSWP (78 aa). A disordered region spans residues 286–322; that stretch reads ATGPTVSPPPPDEASRWLARLRAGKPDQASEPGGGKL.

Homodimer.

The catalysed reaction is prephenate + H(+) = 3-phenylpyruvate + CO2 + H2O. It functions in the pathway amino-acid biosynthesis; L-phenylalanine biosynthesis; phenylpyruvate from prephenate: step 1/1. The sequence is that of Prephenate dehydratase (pheA) from Mycobacterium leprae (strain Br4923).